Here is a 617-residue protein sequence, read N- to C-terminus: Neopullulanase SusA (617 aa).

The signal sequence occupies residues 1–22; the sequence is MKRNLLFIILLLLLPGLHQVFA. Ca(2+) contacts are provided by Asn138, Asn143, Asp144, Gly164, and Asp166. Active-site residues include Asp331 and Glu360.

This sequence belongs to the glycosyl hydrolase 13 family. Ca(2+) serves as cofactor.

The protein localises to the periplasm. The catalysed reaction is Hydrolysis of pullulan to panose (6-alpha-D-glucosylmaltose).. Its pathway is glycan degradation; starch degradation. Functionally, neopullulanase that cleaves 1,4-alpha-glucosidic linkages in starch to produce disaccharides or trisaccharides in starch degradation. In Bacteroides thetaiotaomicron (strain ATCC 29148 / DSM 2079 / JCM 5827 / CCUG 10774 / NCTC 10582 / VPI-5482 / E50), this protein is Neopullulanase SusA (susA).